A 352-amino-acid polypeptide reads, in one-letter code: C-C chemokine receptor type 5 (352 aa).

At 1–30 (MDYQVSSPTYDIDYYTSEPCQKINVKQIAA) the chain is on the extracellular side. Tyrosine 3 carries the post-translational modification Sulfotyrosine. Residues serine 6 and serine 7 are each glycosylated (O-linked (GalNAc...) serine). Sulfotyrosine occurs at positions 10, 14, and 15. 2 disulfide bridges follow: cysteine 20–cysteine 269 and cysteine 101–cysteine 178. The chain crosses the membrane as a helical span at residues 31–58 (RLLPPLYSLVFIFGFVGNILVVLILINC). At 59–68 (KRLKSMTDIY) the chain is on the cytoplasmic side. Residues 69–89 (LLNLAISDLLFLLTVPFWAHY) form a helical membrane-spanning segment. Over 90 to 102 (AAAQWNFGNTMCQ) the chain is Extracellular. A helical membrane pass occupies residues 103 to 124 (LLTGLYFIGFFSGIFFIILLTI). Residues 125-141 (DRYLAIVHAVFALKART) lie on the Cytoplasmic side of the membrane. Residues 142 to 166 (VTFGVVTSVITWVVAVFASLPGIIF) form a helical membrane-spanning segment. The Extracellular portion of the chain corresponds to 167–198 (TRYQREGLHYTCSSHFPYSQYQFWKNFQTLKI). The helical transmembrane segment at 199-218 (VILGLVLPLLVMVICYSGIL) threads the bilayer. The Cytoplasmic segment spans residues 219–235 (KTLLRCRNEKKRHRAVR). Residues 236 to 260 (LIFTIMIVYFLFWAPYNIVLLLNTF) form a helical membrane-spanning segment. Residues 261–277 (QEFFGLNNCSSSNRLDQ) are Extracellular-facing. A helical transmembrane segment spans residues 278–301 (AMQVTETLGMTHCCINPIIYAFVG). Residues 302–352 (EKFRNYLLVFFQKHIAKRFCKCCSIFQQEAPERASSVYTRSTGEQETSVGL) are Cytoplasmic-facing. Residues cysteine 321, cysteine 323, and cysteine 324 are each lipidated (S-palmitoyl cysteine). Serine 336, serine 337, serine 342, and serine 349 each carry phosphoserine; by BARK1.

The protein belongs to the G-protein coupled receptor 1 family. In terms of assembly, interacts with PRAF2. Efficient ligand binding to CCL3/MIP-1alpha and CCL4/MIP-1beta requires sulfation, O-glycosylation and sialic acid modifications. Glycosylation on Ser-6 is required for efficient binding of CCL4. Interacts with GRK2. Interacts with ARRB1 and ARRB2. Interacts with CNIH4. Interacts with S100A4; this interaction stimulates T-lymphocyte chemotaxis. Post-translationally, sulfated on at least 2 of the N-terminal tyrosines. Sulfation is required for efficient binding of the chemokines, CCL3 and CCL4. In terms of processing, palmitoylation in the C-terminal is important for cell surface expression. Phosphorylation on serine residues in the C-terminal is stimulated by binding CC chemokines especially by APO-RANTES. Post-translationally, O-glycosylated, but not N-glycosylated. Ser-6 appears to be the major site even if Ser-7 may be also O-glycosylated. Also sialylated glycans present which contribute to chemokine binding. Thr-16 and Ser-17 may also be glycosylated and, if so, with small moieties such as a T-antigen.

Its subcellular location is the cell membrane. In terms of biological role, receptor for a number of inflammatory CC-chemokines including CCL3/MIP-1-alpha, CCL4/MIP-1-beta and RANTES and subsequently transduces a signal by increasing the intracellular calcium ion level. May play a role in the control of granulocytic lineage proliferation or differentiation. Participates in T-lymphocyte migration to the infection site by acting as a chemotactic receptor. The sequence is that of C-C chemokine receptor type 5 (CCR5) from Erythrocebus patas (Red guenon).